A 247-amino-acid polypeptide reads, in one-letter code: Carboxy-S-adenosyl-L-methionine synthase (247 aa).

Residues tyrosine 40, 65-67 (GCS), 90-91 (DN), 122-123 (DI), asparagine 137, and arginine 204 each bind S-adenosyl-L-methionine.

The protein belongs to the class I-like SAM-binding methyltransferase superfamily. Cx-SAM synthase family. As to quaternary structure, homodimer.

The catalysed reaction is prephenate + S-adenosyl-L-methionine = carboxy-S-adenosyl-L-methionine + 3-phenylpyruvate + H2O. Functionally, catalyzes the conversion of S-adenosyl-L-methionine (SAM) to carboxy-S-adenosyl-L-methionine (Cx-SAM). In Stutzerimonas stutzeri (strain A1501) (Pseudomonas stutzeri), this protein is Carboxy-S-adenosyl-L-methionine synthase.